An 872-amino-acid polypeptide reads, in one-letter code: Bifunctional heparan sulfate N-deacetylase/N-sulfotransferase 4 (872 aa).

Topologically, residues 1–13 (MNLILKFRRSFRT) are cytoplasmic. Residues 14–34 (LIVLLATFCLVSILISAYFLY) form a helical; Signal-anchor for type II membrane protein membrane-spanning segment. The Lumenal portion of the chain corresponds to 35-872 (SGYKQEMTLI…WLRQELQKVR (838 aa)). The segment at 36-588 (GYKQEMTLIE…KRHKDIWSRE (553 aa)) is heparan sulfate N-deacetylase 4. 3 N-linked (GlcNAc...) asparagine glycosylation sites follow: N226, N341, and N391. The interval 589–872 (KTCDHLPKFL…WLRQELQKVR (284 aa)) is heparan sulfate N-sulfotransferase 4. K604 (for sulfotransferase activity) is an active-site residue. 604–608 (KTGTT) contacts 3'-phosphoadenylyl sulfate. The N-linked (GlcNAc...) asparagine glycan is linked to N657. Position 702 (S702) interacts with 3'-phosphoadenylyl sulfate. A glycan (N-linked (GlcNAc...) asparagine) is linked at N793. A disulfide bridge links C808 with C818. 823-827 (KGRKY) provides a ligand contact to 3'-phosphoadenylyl sulfate.

It belongs to the sulfotransferase 1 family. NDST subfamily. Monomer. Expressed at low level in brain and throughout embryogenesis. Not expressed in other tissues.

The protein resides in the golgi apparatus membrane. The enzyme catalyses alpha-D-glucosaminyl-[heparan sulfate](n) + 3'-phosphoadenylyl sulfate = N-sulfo-alpha-D-glucosaminyl-[heparan sulfate](n) + adenosine 3',5'-bisphosphate + 2 H(+). Its pathway is glycan metabolism; heparan sulfate biosynthesis. The protein operates within glycan metabolism; heparin biosynthesis. In terms of biological role, essential bifunctional enzyme that catalyzes both the N-deacetylation and the N-sulfation of glucosamine (GlcNAc) of the glycosaminoglycan in heparan sulfate. Modifies the GlcNAc-GlcA disaccharide repeating sugar backbone to make N-sulfated heparosan, a prerequisite substrate for later modifications in heparin biosynthesis. Has low deacetylase activity but high sulfotransferase activity. This is Bifunctional heparan sulfate N-deacetylase/N-sulfotransferase 4 (Ndst4) from Mus musculus (Mouse).